The following is a 95-amino-acid chain: Phosphoribosyl-ATP pyrophosphatase (95 aa).

It belongs to the PRA-PH family.

It localises to the cytoplasm. It catalyses the reaction 1-(5-phospho-beta-D-ribosyl)-ATP + H2O = 1-(5-phospho-beta-D-ribosyl)-5'-AMP + diphosphate + H(+). It functions in the pathway amino-acid biosynthesis; L-histidine biosynthesis; L-histidine from 5-phospho-alpha-D-ribose 1-diphosphate: step 2/9. This is Phosphoribosyl-ATP pyrophosphatase from Sulfolobus acidocaldarius (strain ATCC 33909 / DSM 639 / JCM 8929 / NBRC 15157 / NCIMB 11770).